Reading from the N-terminus, the 203-residue chain is Dual-action ribosomal maturation protein DarP (203 aa).

Residues 1-13 are compositionally biased toward polar residues; that stretch reads MQPMTRNSRNSPG. The interval 1–39 is disordered; sequence MQPMTRNSRNSPGSRFPGAFAPEPDMDEPKSKSQKKRDM. A compositionally biased stretch (basic and acidic residues) spans 27–39; that stretch reads DEPKSKSQKKRDM.

The protein belongs to the DarP family.

Its subcellular location is the cytoplasm. Member of a network of 50S ribosomal subunit biogenesis factors which assembles along the 30S-50S interface, preventing incorrect 23S rRNA structures from forming. Promotes peptidyl transferase center (PTC) maturation. The chain is Dual-action ribosomal maturation protein DarP from Cupriavidus pinatubonensis (strain JMP 134 / LMG 1197) (Cupriavidus necator (strain JMP 134)).